We begin with the raw amino-acid sequence, 522 residues long: Target of rapamycin complex 2 subunit MAPKAP1 (522 aa).

Alanine 2 is modified (N-acetylalanine). Residues 2 to 184 (AFLDNPTIIL…KKIDVYLPLH (183 aa)) are interaction with MAP3K2. Positions 2 to 267 (AFLDNPTIIL…GFSTLALVEK (266 aa)) are interaction with NBN. Threonine 86 is subject to Phosphothreonine. Residues serine 128, serine 186, serine 315, and serine 356 each carry the phosphoserine modification. The CRIM domain occupies 139-267 (QSILSVRLEQ…GFSTLALVEK (129 aa)). The tract at residues 279 to 353 (LFVRINAAHG…QSAWEFCQVR (75 aa)) is SIN1-type RBD. Positions 382–487 (HYKSFKVSMI…IVLKVNYILE (106 aa)) constitute an SIN1-type PH domain. Residue arginine 393 participates in a 1,2-diacyl-sn-glycero-3-phospho-(1D-myo-inositol-3,4,5-trisphosphate) binding. Phosphothreonine is present on threonine 398. Residues lysine 428 and lysine 464 each contribute to the a 1,2-diacyl-sn-glycero-3-phospho-(1D-myo-inositol-3,4,5-trisphosphate) site. Residues 468 to 522 (FESDAATVNEIVLKVNYILESRASTARADYFAQKQRKLNRRTSFSFQKEKKSGQQ) form an interaction with ATF2 region. At serine 510 the chain carries Phosphoserine.

This sequence belongs to the SIN1 family. In terms of assembly, component of the mechanistic target of rapamycin complex 2 (mTORC2), consisting in two heterotretramers composed of MTOR, MLST8, RICTOR and MAPKAP1/SIN1. The mTORC2 core complex associates with PRR5/PROTOR1 and/or PRR5L/PROTOR2. Contrary to mTORC1, mTORC2 does not bind to and is not sensitive to FKBP12-rapamycin. Interacts with MAP3K2. Interacts with ATF2. Interacts with MAPK8. Interacts with GTP-bound HRAS and KRAS; inhibiting their activity. Interacts with IFNAR2. Phosphorylation at Ser-128 by PKC promotes relocalization to the perinuclear region, where the mTORC2 complex specifically mediates phosphorylation of SGK1. Phosphorylated at Thr-86 by AKT1 or RPS6KB1 in the presence of growth factors; the effect of this phosphorylation is however unclear. According to two studies, phosphorylation at Thr-86 by AKT1 is part of a positive feedback loop that increases mTORC2 activation. According to another study, phosphorylation at Thr-86 and Thr-398 by RPS6KB1 promotes dissociation from the mTORC2 complex, leading to inhibit mTORC2 signaling.

It is found in the cell membrane. Its subcellular location is the endoplasmic reticulum membrane. The protein resides in the early endosome membrane. The protein localises to the late endosome membrane. It localises to the lysosome membrane. It is found in the golgi apparatus membrane. Its subcellular location is the mitochondrion outer membrane. The protein resides in the cytoplasm. The protein localises to the perinuclear region. It localises to the nucleus. Phosphatidylinositol 3,4,5-trisphosphate (PI(3,4,5)P3) promotes MTOR activation by relieving MAPKAP1/SIN1-mediated inhibition of MTOR that takes place in absence of PI(3,4,5)P3. In terms of biological role, component of the mechanistic target of rapamycin complex 2 (mTORC2), which transduces signals from growth factors to pathways involved in proliferation, cytoskeletal organization, lipogenesis and anabolic output. In response to growth factors, mTORC2 phosphorylates and activates AGC protein kinase family members, including AKT (AKT1, AKT2 and AKT3), PKC (PRKCA, PRKCB and PRKCE) and SGK1. In contrast to mTORC1, mTORC2 is nutrient-insensitive. Within the mTORC2 complex, MAPKAP1/SIN1 acts as a substrate adapter which recognizes and binds AGC protein kinase family members for phosphorylation by MTOR. mTORC2 plays a critical role in AKT1 activation by mediating phosphorylation of different sites depending on the context, such as 'Thr-450', 'Ser-473', 'Ser-477' or 'Thr-479', facilitating the phosphorylation of the activation loop of AKT1 on 'Thr-308' by PDPK1/PDK1 which is a prerequisite for full activation. mTORC2 catalyzes the phosphorylation of SGK1 at 'Ser-422' and of PRKCA on 'Ser-657'. The mTORC2 complex also phosphorylates various proteins involved in insulin signaling, such as FBXW8 and IGF2BP1. mTORC2 acts upstream of Rho GTPases to regulate the actin cytoskeleton, probably by activating one or more Rho-type guanine nucleotide exchange factors. mTORC2 promotes the serum-induced formation of stress-fibers or F-actin. MAPKAP1 inhibits MAP3K2 by preventing its dimerization and autophosphorylation. Inhibits HRAS and KRAS independently of mTORC2 complex. Enhances osmotic stress-induced phosphorylation of ATF2 and ATF2-mediated transcription. Involved in ciliogenesis, regulates cilia length through its interaction with CCDC28B independently of mTORC2 complex. The sequence is that of Target of rapamycin complex 2 subunit MAPKAP1 (MAPKAP1) from Pongo abelii (Sumatran orangutan).